Reading from the N-terminus, the 278-residue chain is Phosphonates import ATP-binding protein PhnC (278 aa).

The 249-residue stretch at 25–273 (LAVKGLVKAY…IIQDIYSDES (249 aa)) folds into the ABC transporter domain. 58–65 (GRSGAGKS) contacts ATP.

This sequence belongs to the ABC transporter superfamily. Phosphonates importer (TC 3.A.1.9.1) family. The complex is composed of two ATP-binding proteins (PhnC), two transmembrane proteins (PhnE) and a solute-binding protein (PhnD).

The protein resides in the cell inner membrane. The catalysed reaction is phosphonate(out) + ATP + H2O = phosphonate(in) + ADP + phosphate + H(+). Its function is as follows. Part of the ABC transporter complex PhnCDE involved in phosphonates import. Responsible for energy coupling to the transport system. This chain is Phosphonates import ATP-binding protein PhnC, found in Yersinia pestis bv. Antiqua (strain Antiqua).